Here is a 470-residue protein sequence, read N- to C-terminus: Probable E3 ubiquitin-protein ligase TRIML1 (470 aa).

The segment at 22-63 adopts an RING-type zinc-finger fold; it reads CFICLDYFSSPVTTECGHSFCLMCLLKSWEEHNTPLSCPECW. Coiled-coil stretches lie at residues 135–170 and 196–235; these read SEAE…KERV and KEEE…GKMI. The region spanning 273–470 is the B30.2/SPRY domain; it reads TELSLCHITG…NTDPLIICHI (198 aa).

Interacts with USP5. As to expression, testis.

It catalyses the reaction S-ubiquitinyl-[E2 ubiquitin-conjugating enzyme]-L-cysteine + [acceptor protein]-L-lysine = [E2 ubiquitin-conjugating enzyme]-L-cysteine + N(6)-ubiquitinyl-[acceptor protein]-L-lysine.. Its pathway is protein modification; protein ubiquitination. Functionally, probable E3 ubiquitin-protein ligase which plays an important role in blastocyst development. Involved in progression of blastocyst stage and subsequent embryo development. The polypeptide is Probable E3 ubiquitin-protein ligase TRIML1 (Triml1) (Mus musculus (Mouse)).